The sequence spans 98 residues: NADH-ubiquinone oxidoreductase chain 4L (98 aa).

3 consecutive transmembrane segments (helical) span residues 1-21, 29-49, and 61-81; these read MSMV…GLLM, SLLC…VAIL, and IILL…LVMV.

It belongs to the complex I subunit 4L family. Core subunit of respiratory chain NADH dehydrogenase (Complex I) which is composed of 45 different subunits.

The protein resides in the mitochondrion inner membrane. It catalyses the reaction a ubiquinone + NADH + 5 H(+)(in) = a ubiquinol + NAD(+) + 4 H(+)(out). Its function is as follows. Core subunit of the mitochondrial membrane respiratory chain NADH dehydrogenase (Complex I) which catalyzes electron transfer from NADH through the respiratory chain, using ubiquinone as an electron acceptor. Part of the enzyme membrane arm which is embedded in the lipid bilayer and involved in proton translocation. This is NADH-ubiquinone oxidoreductase chain 4L (MT-ND4L) from Puma concolor (Mountain lion).